The primary structure comprises 101 residues: Small ribosomal subunit protein uS14 (101 aa).

Belongs to the universal ribosomal protein uS14 family. Part of the 30S ribosomal subunit. Contacts proteins S3 and S10.

In terms of biological role, binds 16S rRNA, required for the assembly of 30S particles and may also be responsible for determining the conformation of the 16S rRNA at the A site. The protein is Small ribosomal subunit protein uS14 of Burkholderia mallei (strain NCTC 10247).